The primary structure comprises 447 residues: RNA-binding protein 208 (447 aa).

RRM domains are found at residues 73 to 147 (RSVY…WAYA) and 158 to 236 (FHIF…WATK). Residues 254 to 269 (TNGSSSNPGMEASQDT) show a composition bias toward polar residues. Disordered regions lie at residues 254–279 (TNGS…ENNP) and 353–372 (WGNK…PPLP). The RRM 3 domain maps to 282–356 (TTVYVGNLGH…KPIKCSWGNK (75 aa)).

As to quaternary structure, interacts with RBP-P.

RNA-binding protein. This is RNA-binding protein 208 from Oryza sativa subsp. japonica (Rice).